Consider the following 376-residue polypeptide: Thiol-disulfide oxidoreductase LTO1 (376 aa).

The transit peptide at 1 to 45 directs the protein to the chloroplast; that stretch reads MMARFVSVSSCQFHFGFREVSPPSVTSYPRRFEVSDRRFPAIPIK. The tract at residues 44 to 77 is disordered; the sequence is IKCSSSEPENGEDSAPSLSSSSSSSTSEVSTSNS. The Stromal segment spans residues 46–81; sequence CSSSEPENGEDSAPSLSSSSSSSTSEVSTSNSSTYN. A compositionally biased stretch (low complexity) spans 57–77; that stretch reads SAPSLSSSSSSSTSEVSTSNS. A helical transmembrane segment spans residues 82–102; that stretch reads WYTGIGGIGMLDTAYLTYLKV. Residues 103 to 125 are Lumenal-facing; it reads TGSDAFCPIGGGTCGDVLNSDYA. A disulfide bond links Cys109 and Cys116. Residues 126 to 146 traverse the membrane as a helical segment; that stretch reads VVFGVPLPVIGFVMYGVVTAL. At 147–165 the chain is on the stromal side; the sequence is SAELGEGNLPFGISKSNGR. The chain crosses the membrane as a helical span at residues 166–186; it reads FALFGITTAMASASAYFLYIL. At 187–192 the chain is on the lumenal side; the sequence is STKLSG. The chain crosses the membrane as a helical span at residues 193-213; the sequence is SSCLYCLVSAFLSFSLFFLSV. Residues Cys195 and Cys198 are joined by a disulfide bond. Residues 214–223 are Stromal-facing; that stretch reads KDVKLQEIQQ. A helical transmembrane segment spans residues 224 to 244; the sequence is VVGLQICLAIIVVASLTASYS. The Lumenal portion of the chain corresponds to 245-376; it reads TAQPIPSRSG…DQANETNQLQ (132 aa). 2 disulfides stabilise this stretch: Cys293/Cys296 and Cys316/Cys331.

The protein belongs to the VKOR family. Interacts with the PSII subunits PSBO1 and PSBO2. Interacts with TL17, TL20.3, HCF164, PETJ, VDE1, EDA3, FKBP13 and FKBP20-2. As to expression, expressed in cotyledons, rosette leaves, stems, cauline leaves and flowers.

It is found in the plastid. It localises to the chloroplast thylakoid membrane. Functionally, thiol-disulfide oxidoreductase catalyzing disulfide bond formation of chloroplast proteins and involved in redox regulation and photosynthetic electron transport. Required for the assembly of photosystem II (PSII) through the formation of disulfide bond in PSBO, a subunit of the PSII oxygen-evolving complex in the thylakoid lumen. Involved in the formation of disulfide bonds in the lumenal protein FKBP13. In vitro, reduces phylloquinone (vitamin K1) and menaquinone (vitamin K2) to their respective quinol. Cannot reduce phylloquinone epoxide to phylloquinone. Plays an important role in regulating the thylakoid lumen redox. The polypeptide is Thiol-disulfide oxidoreductase LTO1 (Arabidopsis thaliana (Mouse-ear cress)).